The sequence spans 1159 residues: ATP-dependent helicase/deoxyribonuclease subunit B (1159 aa).

8-15 (GRAGSGKT) contacts ATP. [4Fe-4S] cluster-binding residues include Cys-784, Cys-1102, Cys-1105, and Cys-1111. A disordered region spans residues 1140–1159 (VKEDGSQVDGRTEGSDNNEG).

Belongs to the helicase family. AddB/RexB type 1 subfamily. Heterodimer of AddA and AddB. Requires Mg(2+) as cofactor. [4Fe-4S] cluster serves as cofactor.

The heterodimer acts as both an ATP-dependent DNA helicase and an ATP-dependent, dual-direction single-stranded exonuclease. Recognizes the chi site generating a DNA molecule suitable for the initiation of homologous recombination. The AddB subunit has 5' -&gt; 3' nuclease activity but not helicase activity. The protein is ATP-dependent helicase/deoxyribonuclease subunit B of Caldanaerobacter subterraneus subsp. tengcongensis (strain DSM 15242 / JCM 11007 / NBRC 100824 / MB4) (Thermoanaerobacter tengcongensis).